Consider the following 976-residue polypeptide: Alpha-amylase (976 aa).

Positions 1–33 (MKRGKLWGRLVSAAGLSLSIFLSSIGNVSTAYA) are cleaved as a signal peptide. A disordered region spans residues 45 to 98 (TKENTESATDASSNEASDAEADNDTDEAITDASSKELSAENDGASESDSSFDEY). Residues 50–60 (ESATDASSNEA) are compositionally biased toward low complexity. Composition is skewed to acidic residues over residues 61-73 (SDAE…DEAI) and 87-96 (GASESDSSFD). Residues Asn-243, Thr-284, and Asp-293 each contribute to the Ca(2+) site. Asp-323 functions as the Nucleophile in the catalytic mechanism. Residue His-327 participates in Ca(2+) binding. The active-site Proton donor is Glu-375.

It belongs to the glycosyl hydrolase 13 family. In terms of assembly, monomer. The cofactor is Ca(2+).

The enzyme catalyses Endohydrolysis of (1-&gt;4)-alpha-D-glucosidic linkages in polysaccharides containing three or more (1-&gt;4)-alpha-linked D-glucose units.. The sequence is that of Alpha-amylase (amyA) from Butyrivibrio fibrisolvens.